The primary structure comprises 348 residues: Dihydroorotase (348 aa).

Residues histidine 14 and histidine 16 each contribute to the Zn(2+) site. Residues 16–18 (HLR) and asparagine 42 contribute to the substrate site. Positions 100, 137, and 175 each coordinate Zn(2+). N6-carboxylysine is present on lysine 100. Histidine 137 contributes to the substrate binding site. Leucine 220 lines the substrate pocket. Aspartate 248 lines the Zn(2+) pocket. Aspartate 248 is a catalytic residue. Histidine 252 and alanine 264 together coordinate substrate.

It belongs to the metallo-dependent hydrolases superfamily. DHOase family. Class II DHOase subfamily. Homodimer. Zn(2+) serves as cofactor.

It catalyses the reaction (S)-dihydroorotate + H2O = N-carbamoyl-L-aspartate + H(+). The protein operates within pyrimidine metabolism; UMP biosynthesis via de novo pathway; (S)-dihydroorotate from bicarbonate: step 3/3. Catalyzes the reversible cyclization of carbamoyl aspartate to dihydroorotate. This chain is Dihydroorotase, found in Pseudomonas putida (strain W619).